Reading from the N-terminus, the 367-residue chain is Protein P39 (367 aa).

Coiled-coil stretches lie at residues 165–202 (REGE…SKQQ) and 235–308 (EMIE…SDRL).

Its function is as follows. Might be involved in virion assembly and vector-mediated transmission of the virus. The protein is Protein P39 of Peanut clump virus (isolate 87/TGTA2) (PCV).